Reading from the N-terminus, the 100-residue chain is NADH-quinone oxidoreductase subunit K 2 (100 aa).

The next 3 membrane-spanning stretches (helical) occupy residues 2 to 22, 29 to 49, and 61 to 81; these read LAIENYLILSAILFAIGTIGV, IVIFMCIELMLNAVNLTFIAF, and FVFFVMTVAAAEAAVGLALMI.

Belongs to the complex I subunit 4L family. In terms of assembly, NDH-1 is composed of 14 different subunits. Subunits NuoA, H, J, K, L, M, N constitute the membrane sector of the complex.

Its subcellular location is the cell inner membrane. It carries out the reaction a quinone + NADH + 5 H(+)(in) = a quinol + NAD(+) + 4 H(+)(out). In terms of biological role, NDH-1 shuttles electrons from NADH, via FMN and iron-sulfur (Fe-S) centers, to quinones in the respiratory chain. The immediate electron acceptor for the enzyme in this species is believed to be ubiquinone. Couples the redox reaction to proton translocation (for every two electrons transferred, four hydrogen ions are translocated across the cytoplasmic membrane), and thus conserves the redox energy in a proton gradient. This is NADH-quinone oxidoreductase subunit K 2 from Geobacter sp. (strain M21).